A 158-amino-acid chain; its full sequence is Probable deoxyuridine 5'-triphosphate nucleotidohydrolase (158 aa).

The protein belongs to the dUTPase family. Mg(2+) is required as a cofactor.

It catalyses the reaction dUTP + H2O = dUMP + diphosphate + H(+). The protein operates within pyrimidine metabolism; dUMP biosynthesis; dUMP from dCTP (dUTP route): step 1/2. Its function is as follows. This enzyme is involved in nucleotide metabolism: it produces dUMP, the immediate precursor of thymidine nucleotides and it decreases the intracellular concentration of dUTP so that uracil cannot be incorporated into DNA. It does probably not deaminate dCTP. In Sulfolobus islandicus rod-shaped virus 1 (SIRV-1), this protein is Probable deoxyuridine 5'-triphosphate nucleotidohydrolase.